A 55-amino-acid polypeptide reads, in one-letter code: Large ribosomal subunit protein bL33 (55 aa).

This sequence belongs to the bacterial ribosomal protein bL33 family.

The polypeptide is Large ribosomal subunit protein bL33 (Paenarthrobacter aurescens (strain TC1)).